The sequence spans 329 residues: Peroxidase 18 (329 aa).

The first 29 residues, 1 to 29 (MALQFFSCKPKYTFLSSLLLLLLLSSSVA), serve as a signal peptide directing secretion. 4 disulfide bridges follow: C40–C116, C73–C78, C122–C325, and C201–C235. The active-site Proton acceptor is H71. 5 residues coordinate Ca(2+): D72, V75, G77, D79, and S81. N-linked (GlcNAc...) asparagine glycosylation occurs at N87. A substrate-binding site is contributed by I164. Residue H194 coordinates heme b. T195 provides a ligand contact to Ca(2+). D249, T252, and D257 together coordinate Ca(2+).

This sequence belongs to the peroxidase family. Classical plant (class III) peroxidase subfamily. It depends on heme b as a cofactor. Requires Ca(2+) as cofactor.

The protein resides in the secreted. It carries out the reaction 2 a phenolic donor + H2O2 = 2 a phenolic radical donor + 2 H2O. In terms of biological role, removal of H(2)O(2), oxidation of toxic reductants, biosynthesis and degradation of lignin, suberization, auxin catabolism, response to environmental stresses such as wounding, pathogen attack and oxidative stress. These functions might be dependent on each isozyme/isoform in each plant tissue. The protein is Peroxidase 18 (PER18) of Arabidopsis thaliana (Mouse-ear cress).